The chain runs to 126 residues: Protein MGF 100-1R (126 aa).

Belongs to the asfivirus MGF 100 family.

Functionally, plays a role in virus cell tropism, and may be required for efficient virus replication in macrophages. The sequence is that of Protein MGF 100-1R from Ornithodoros (relapsing fever ticks).